Here is a 257-residue protein sequence, read N- to C-terminus: MLITISPAKTLDYTSPLATTRYTQPELLDYSSQLISVCKKLTPAHIASLMSISDKLADLNAGRFSEWHPDFTPENARQALLAFKGDVYTGLAAESFSEDDFDFAQQHLRMLSGLYGVLRPLDLMQPYRLEMGTKLENKAGKDLYSFWGDTITEKLNQALHAQGDDVLINLASDEYFKAVKPKNLNARLIKPVFLDEKNGKFKVISFYAKKARGLMSRFIIQNRLTQPEQLKAFNLEGYAFEAADSSANELVFKRHEQ.

The protein belongs to the UPF0246 family.

This is UPF0246 protein ECA3888 from Pectobacterium atrosepticum (strain SCRI 1043 / ATCC BAA-672) (Erwinia carotovora subsp. atroseptica).